The chain runs to 485 residues: Glutamyl-tRNA(Gln) amidotransferase subunit A (485 aa).

Catalysis depends on charge relay system residues K79 and S154. S178 serves as the catalytic Acyl-ester intermediate.

This sequence belongs to the amidase family. GatA subfamily. As to quaternary structure, heterotrimer of A, B and C subunits.

The catalysed reaction is L-glutamyl-tRNA(Gln) + L-glutamine + ATP + H2O = L-glutaminyl-tRNA(Gln) + L-glutamate + ADP + phosphate + H(+). Allows the formation of correctly charged Gln-tRNA(Gln) through the transamidation of misacylated Glu-tRNA(Gln) in organisms which lack glutaminyl-tRNA synthetase. The reaction takes place in the presence of glutamine and ATP through an activated gamma-phospho-Glu-tRNA(Gln). This is Glutamyl-tRNA(Gln) amidotransferase subunit A from Sulfurihydrogenibium sp. (strain YO3AOP1).